A 1148-amino-acid chain; its full sequence is Signal transducer and activator of transcription B (1148 aa).

Positions 1-36 (MEVTNNGSNNSSTIASTNPPTSPSTTSTSKSLPPLS) are enriched in low complexity. 5 disordered regions span residues 1–81 (MEVT…NNNN), 93–178 (SSSN…LSSS), 268–312 (NTNN…PSNG), 403–425 (KNNI…NSLL), and 453–645 (YDYN…KTVT). Polar residues predominate over residues 37-47 (FLNSQWENKQS). Low complexity-rich tracts occupy residues 48–81 (NNNN…NNNN), 106–178 (NNNN…LSSS), and 268–298 (NTNN…NNNN). Low complexity predominate over residues 466–517 (SNSSNNNSSNNNSNNNNNNNSNNNNNIIGSISPPHSSQLQQVSSPQQQQQQQ). Residues 525-541 (SISSGSIKDLINSPNKE) show a composition bias toward polar residues. Over residues 544 to 557 (SKSQYPSSLSQSSS) the composition is skewed to low complexity. Over residues 561–572 (MDTDVDSTDEFD) the composition is skewed to acidic residues. Low complexity predominate over residues 574-610 (GSNSNNNNNNNNNNNNNNNSNNSNNKKRNNSNNNNLG). One can recognise an SH2 domain in the interval 997–1122 (WQNGFIFMFL…TIPVFKREPK (126 aa)).

This sequence belongs to the transcription factor STAT family. As to quaternary structure, homodimer. Does not form heterodimers with other family members.

It localises to the nucleus. Its function is as follows. Transcription factor that regulates gene expression during development. Required for optimal cell growth. The protein is Signal transducer and activator of transcription B (dstB) of Dictyostelium discoideum (Social amoeba).